We begin with the raw amino-acid sequence, 515 residues long: Glycosyltransferase family 92 protein F59C6.8 (515 aa).

Residues 18–38 form a helical membrane-spanning segment; it reads LFIFIAVCLGFLIAVTILAGL. Positions 163–456 constitute a GT92 domain; sequence RKVVACFSPL…IEVCYNRIFY (294 aa).

It belongs to the glycosyltransferase 92 family.

It is found in the membrane. The polypeptide is Glycosyltransferase family 92 protein F59C6.8 (Caenorhabditis elegans).